The following is a 103-amino-acid chain: Small ribosomal subunit protein bS6c (103 aa).

It belongs to the bacterial ribosomal protein bS6 family.

It is found in the plastid. Its subcellular location is the chloroplast. Its function is as follows. Binds together with bS18 to 16S ribosomal RNA. In Thalassiosira pseudonana (Marine diatom), this protein is Small ribosomal subunit protein bS6c.